Reading from the N-terminus, the 555-residue chain is Glucose-6-phosphate isomerase (555 aa).

The Proton donor role is filled by Glu-355. Active-site residues include His-386 and Lys-514.

This sequence belongs to the GPI family.

The protein localises to the cytoplasm. The catalysed reaction is alpha-D-glucose 6-phosphate = beta-D-fructose 6-phosphate. It participates in carbohydrate biosynthesis; gluconeogenesis. Its pathway is carbohydrate degradation; glycolysis; D-glyceraldehyde 3-phosphate and glycerone phosphate from D-glucose: step 2/4. Functionally, catalyzes the reversible isomerization of glucose-6-phosphate to fructose-6-phosphate. The chain is Glucose-6-phosphate isomerase from Buchnera aphidicola subsp. Schizaphis graminum (strain Sg).